Consider the following 165-residue polypeptide: MVDKNSLRKLMLLKRAELNDLEKSHLDQKINQKLMAFLITRPTIKNLALYIPIKNEVAFLDNFLDFLKLNKITSCFPSIVDQFNMKFIDQNNNEINPNDIDCFFIPLLAFNKANHRIGFGKGYYDRYLSLTSKKQLKIGIAYDFQYAEFTNDPWDYQLDLIICNG.

4-8 (KNSLR) contacts ATP. Substrate contacts are provided by I51 and E56. An ATP-binding site is contributed by 116–124 (RIGFGKGYY). Residue D125 participates in Mg(2+) binding. Residues R126 and W154 each contribute to the ATP site. Residue D155 coordinates Mg(2+).

It belongs to the 5-formyltetrahydrofolate cyclo-ligase family. In terms of assembly, monomer or homodimer. Mg(2+) serves as cofactor.

The protein resides in the cytoplasm. The enzyme catalyses (6S)-5-formyl-5,6,7,8-tetrahydrofolate + ATP = (6R)-5,10-methenyltetrahydrofolate + ADP + phosphate. In terms of biological role, involved in folate metabolism. Catalyzes the irreversible conversion of 5-formyltetrahydrofolate (5-FTHF) to yield 5,10-methenyltetrahydrofolate. This chain is 5-formyltetrahydrofolate cyclo-ligase, found in Mycoplasma genitalium (strain ATCC 33530 / DSM 19775 / NCTC 10195 / G37) (Mycoplasmoides genitalium).